The sequence spans 265 residues: Cell adhesion molecule CEACAM10 (265 aa).

Residues 1 to 33 (MELASAHLHKGQVPWVGLLLTASLLTYWSPATT) form the signal peptide. Ig-like V-type domains lie at 35–142 (QVTV…HVHP) and 155–262 (QVTV…NVHA). N-linked (GlcNAc...) asparagine glycans are attached at residues Asn44, Asn87, and Asn224.

Belongs to the immunoglobulin superfamily. CEA family. In terms of tissue distribution, abundant in seminal vesicle and traces in epididymis and prostate (at protein level). Highly expressed in seminal vesicle, minor in colon and placenta and, to a lesser extent, in small intestine, caecum, stomach, salivary gland and bone marrow.

The protein localises to the secreted. It is found in the extracellular space. Its function is as follows. May interact with other CEACAM proteins on the sperm surface. The polypeptide is Cell adhesion molecule CEACAM10 (Mus musculus (Mouse)).